A 212-amino-acid chain; its full sequence is Uracil phosphoribosyltransferase (212 aa).

Residues R78, R103, and 130–138 contribute to the 5-phospho-alpha-D-ribose 1-diphosphate site; that span reads DPMLATGSS. Uracil-binding positions include I193 and 198 to 200; that span reads GDA. D199 serves as a coordination point for 5-phospho-alpha-D-ribose 1-diphosphate.

Belongs to the UPRTase family. The cofactor is Mg(2+).

It carries out the reaction UMP + diphosphate = 5-phospho-alpha-D-ribose 1-diphosphate + uracil. It participates in pyrimidine metabolism; UMP biosynthesis via salvage pathway; UMP from uracil: step 1/1. Allosterically activated by GTP. Its function is as follows. Catalyzes the conversion of uracil and 5-phospho-alpha-D-ribose 1-diphosphate (PRPP) to UMP and diphosphate. In Pseudomonas savastanoi pv. phaseolicola (strain 1448A / Race 6) (Pseudomonas syringae pv. phaseolicola (strain 1448A / Race 6)), this protein is Uracil phosphoribosyltransferase.